Consider the following 160-residue polypeptide: uncharacterized protein (160 aa).

The N-terminal stretch at 1-23 (MSIPHSVFSALLVFVALATTTLA) is a signal peptide. The Cytoplasmic portion of the chain corresponds to 24–132 (STEACLPTNK…DPNTAYWSSD (109 aa)). A helical membrane pass occupies residues 133–155 (LFGFYTTPTNVTVEMTGYLIWSM). Over 156–160 (GNRRR) the chain is Extracellular.

To yeast protein FLO1.

The protein localises to the cell membrane. This is an uncharacterized protein from Saccharomyces cerevisiae (strain ATCC 204508 / S288c) (Baker's yeast).